The chain runs to 91 residues: Small ribosomal subunit protein uS15 (91 aa).

The protein belongs to the universal ribosomal protein uS15 family. As to quaternary structure, part of the 30S ribosomal subunit. Forms a bridge to the 50S subunit in the 70S ribosome, contacting the 23S rRNA.

In terms of biological role, one of the primary rRNA binding proteins, it binds directly to 16S rRNA where it helps nucleate assembly of the platform of the 30S subunit by binding and bridging several RNA helices of the 16S rRNA. Forms an intersubunit bridge (bridge B4) with the 23S rRNA of the 50S subunit in the ribosome. The chain is Small ribosomal subunit protein uS15 from Rickettsia typhi (strain ATCC VR-144 / Wilmington).